Here is a 76-residue protein sequence, read N- to C-terminus: Large ribosomal subunit protein uL24 (76 aa).

This sequence belongs to the universal ribosomal protein uL24 family. As to quaternary structure, part of the 50S ribosomal subunit.

One of two assembly initiator proteins, it binds directly to the 5'-end of the 23S rRNA, where it nucleates assembly of the 50S subunit. In terms of biological role, one of the proteins that surrounds the polypeptide exit tunnel on the outside of the subunit. The protein is Large ribosomal subunit protein uL24 of Sulfurimonas denitrificans (strain ATCC 33889 / DSM 1251) (Thiomicrospira denitrificans (strain ATCC 33889 / DSM 1251)).